The primary structure comprises 640 residues: Probable potassium transport system protein Kup (640 aa).

The next 12 membrane-spanning stretches (helical) occupy residues 26 to 46, 69 to 89, 117 to 137, 155 to 175, 186 to 206, 224 to 244, 265 to 285, 297 to 317, 355 to 375, 384 to 404, 415 to 435, and 437 to 457; these read IAGL…TSPL, ILSL…VLFI, AWVL…DGMI, PAFR…LFVI, IFGP…IAGI, FFAD…LAIT, WFLV…ALIL, LLVP…ATII, IYVP…VVGF, AYGI…FVVV, AGLF…ATTV, and ILAG…LLTT.

The protein belongs to the HAK/KUP transporter (TC 2.A.72) family.

The protein localises to the cell inner membrane. The catalysed reaction is K(+)(in) + H(+)(in) = K(+)(out) + H(+)(out). Transport of potassium into the cell. Likely operates as a K(+):H(+) symporter. This chain is Probable potassium transport system protein Kup, found in Aromatoleum aromaticum (strain DSM 19018 / LMG 30748 / EbN1) (Azoarcus sp. (strain EbN1)).